The following is a 79-amino-acid chain: Spidroin-1 (79 aa).

The protein belongs to the silk fibroin family. In terms of assembly, major subunit, with spidroin 2, of the dragline silk.

Its subcellular location is the secreted. The protein resides in the extracellular space. Spiders' major ampullate silk possesses unique characteristics of strength and elasticity. Fibroin consists of pseudocrystalline regions of antiparallel beta-sheet interspersed with elastic amorphous segments. This is Spidroin-1 from Araneus bicentenarius (Giant lichen orbweaver).